We begin with the raw amino-acid sequence, 529 residues long: G-protein coupled receptor 161 (529 aa).

The Extracellular segment spans residues 1-30 (MSLNSSLSCRKELSNLTEEEGGEGGVIITQ). Asn-4 and Asn-15 each carry an N-linked (GlcNAc...) asparagine glycan. Residues 31–51 (FIAIIVITIFVCLGNLVIVVT) traverse the membrane as a helical segment. The Cytoplasmic portion of the chain corresponds to 52–64 (LYKKSYLLTLSNK). Residues 65-85 (FVFSLTLSNFLLSVLVLPFVV) traverse the membrane as a helical segment. Over 86-101 (TSSIRREWIFGVVWCN) the chain is Extracellular. Residues Cys-100 and Cys-178 are joined by a disulfide bond. Residues 102–123 (FSALLYLLISSASMLTLGVIAI) form a helical membrane-spanning segment. The Cytoplasmic portion of the chain corresponds to 124 to 143 (DRYYAVLYPMVYPMKITGNR). A helical transmembrane segment spans residues 144–164 (AVMALVYIWLHSLIGCLPPLF). At 165-190 (GWSSVEFDEFKWMCVAAWHREPGYTA) the chain is on the extracellular side. The helical transmembrane segment at 191–211 (FWQIWCALFPFLVMLVCYGFI) threads the bilayer. Topologically, residues 212–269 (FRVARVKARKVHCGTVVIVEEDAQRTGRKNSSTSTSSSGSRRNAFQGVVYSANQCKAL) are cytoplasmic. The helical transmembrane segment at 270-290 (ITILVVLGAFMVTWGPYMVVI) threads the bilayer. The Extracellular portion of the chain corresponds to 291–306 (ASEALWGKSSVSPSLE). Residues 307–327 (TWATWLSFASAVCHPLIYGLW) traverse the membrane as a helical segment. At 328–529 (NKTVRKELLG…EGDVLAAEQR (202 aa)) the chain is on the cytoplasmic side.

It belongs to the G-protein coupled receptor 1 family.

The protein resides in the cell projection. It localises to the cilium membrane. It is found in the cell membrane. Functionally, key negative regulator of Shh signaling, which promotes the processing of GLI3 into GLI3R during neural tube development. Recruited by TULP3 and the IFT-A complex to primary cilia and acts as a regulator of the PKA-dependent basal repression machinery in Shh signaling by increasing cAMP levels, leading to promote the PKA-dependent processing of GLI3 into GLI3R and repress the Shh signaling. In presence of SHH, it is removed from primary cilia and is internalized into recycling endosomes, preventing its activity and allowing activation of the Shh signaling. Its ligand is unknown. The protein is G-protein coupled receptor 161 (GPR161) of Homo sapiens (Human).